Here is a 173-residue protein sequence, read N- to C-terminus: Photosystem I assembly protein Ycf3 (173 aa).

TPR repeat units lie at residues 35 to 68 (AFSY…EIDP), 72 to 105 (SYIL…NPSL), and 120 to 153 (GEQA…APNS).

It belongs to the Ycf3 family.

Its subcellular location is the plastid. The protein localises to the chloroplast thylakoid membrane. Its function is as follows. Essential for the assembly of the photosystem I (PSI) complex. May act as a chaperone-like factor to guide the assembly of the PSI subunits. The chain is Photosystem I assembly protein Ycf3 from Mesostigma viride (Green alga).